We begin with the raw amino-acid sequence, 263 residues long: Imidazole glycerol phosphate synthase subunit HisF (263 aa).

Catalysis depends on residues D11 and D130.

It belongs to the HisA/HisF family. In terms of assembly, heterodimer of HisH and HisF.

The protein localises to the cytoplasm. The enzyme catalyses 5-[(5-phospho-1-deoxy-D-ribulos-1-ylimino)methylamino]-1-(5-phospho-beta-D-ribosyl)imidazole-4-carboxamide + L-glutamine = D-erythro-1-(imidazol-4-yl)glycerol 3-phosphate + 5-amino-1-(5-phospho-beta-D-ribosyl)imidazole-4-carboxamide + L-glutamate + H(+). It participates in amino-acid biosynthesis; L-histidine biosynthesis; L-histidine from 5-phospho-alpha-D-ribose 1-diphosphate: step 5/9. Its function is as follows. IGPS catalyzes the conversion of PRFAR and glutamine to IGP, AICAR and glutamate. The HisF subunit catalyzes the cyclization activity that produces IGP and AICAR from PRFAR using the ammonia provided by the HisH subunit. This Herpetosiphon aurantiacus (strain ATCC 23779 / DSM 785 / 114-95) protein is Imidazole glycerol phosphate synthase subunit HisF.